The primary structure comprises 354 residues: UDP-N-acetylglucosamine--N-acetylmuramyl-(pentapeptide) pyrophosphoryl-undecaprenol N-acetylglucosamine transferase (354 aa).

UDP-N-acetyl-alpha-D-glucosamine-binding positions include 11 to 13 (TAG), R164, S194, and Q289.

This sequence belongs to the glycosyltransferase 28 family. MurG subfamily.

The protein resides in the cell membrane. It catalyses the reaction di-trans,octa-cis-undecaprenyl diphospho-N-acetyl-alpha-D-muramoyl-L-alanyl-D-glutamyl-meso-2,6-diaminopimeloyl-D-alanyl-D-alanine + UDP-N-acetyl-alpha-D-glucosamine = di-trans,octa-cis-undecaprenyl diphospho-[N-acetyl-alpha-D-glucosaminyl-(1-&gt;4)]-N-acetyl-alpha-D-muramoyl-L-alanyl-D-glutamyl-meso-2,6-diaminopimeloyl-D-alanyl-D-alanine + UDP + H(+). It participates in cell wall biogenesis; peptidoglycan biosynthesis. In terms of biological role, cell wall formation. Catalyzes the transfer of a GlcNAc subunit on undecaprenyl-pyrophosphoryl-MurNAc-pentapeptide (lipid intermediate I) to form undecaprenyl-pyrophosphoryl-MurNAc-(pentapeptide)GlcNAc (lipid intermediate II). The sequence is that of UDP-N-acetylglucosamine--N-acetylmuramyl-(pentapeptide) pyrophosphoryl-undecaprenol N-acetylglucosamine transferase from Clostridium botulinum (strain Langeland / NCTC 10281 / Type F).